A 187-amino-acid chain; its full sequence is Peptide deformylase (187 aa).

Positions 107 and 149 each coordinate Fe cation. E150 is an active-site residue. Residue H153 participates in Fe cation binding.

Belongs to the polypeptide deformylase family. The cofactor is Fe(2+).

It carries out the reaction N-terminal N-formyl-L-methionyl-[peptide] + H2O = N-terminal L-methionyl-[peptide] + formate. Removes the formyl group from the N-terminal Met of newly synthesized proteins. Requires at least a dipeptide for an efficient rate of reaction. N-terminal L-methionine is a prerequisite for activity but the enzyme has broad specificity at other positions. This Synechocystis sp. (strain ATCC 27184 / PCC 6803 / Kazusa) protein is Peptide deformylase.